The primary structure comprises 531 residues: Basal body-orientation factor 1 (531 aa).

A compositionally biased stretch (basic residues) spans 1 to 19 (MPKLKVKAGKGKKGKRKKA). The tract at residues 1–32 (MPKLKVKAGKGKKGKRKKAGKNEHRLDKESEV) is disordered. Residues 20–32 (GKNEHRLDKESEV) show a composition bias toward basic and acidic residues. 2 coiled-coil regions span residues 26–213 (LDKE…AEKA) and 274–365 (VQEK…VESF). Residues 465-505 (QSRKSPGLKPSPPADVSSIKEKEINTSNLEEKPEESSSTFI) are disordered. Basic and acidic residues predominate over residues 482–499 (SIKEKEINTSNLEEKPEE).

Belongs to the BBOF1 family. Multiciliated cells.

It localises to the cytoplasm. Its subcellular location is the cytoskeleton. The protein resides in the cilium basal body. In terms of biological role, basal body protein required in multiciliate cells to align and maintain cilia orientation in response to flow. May act by mediating a maturation step that stabilizes and aligns cilia orientation. Not required to respond to planar cell polarity (PCP) or flow-based orientation cues. This Xenopus laevis (African clawed frog) protein is Basal body-orientation factor 1 (ccdc176).